We begin with the raw amino-acid sequence, 120 residues long: MALTVPLIVLAVLLSLMESPASAPVHRGRGGWTLNSAGYLLGPVLHPPSRAEGGGKGKTALGILDLWKAIDGLPYPQSQLASKRSLGETFAKPDSGVTFVGVPDVVPWKRIRPGTTRFQI.

The N-terminal stretch at 1–22 is a signal peptide; sequence MALTVPLIVLAVLLSLMESPAS. Positions 85 to 120 are excised as a propeptide; it reads SLGETFAKPDSGVTFVGVPDVVPWKRIRPGTTRFQI.

It belongs to the galanin family.

It localises to the secreted. Its function is as follows. Hypothalamic neuropeptide which binds to the G-protein-coupled galanin receptors (GALR1, GALR2 and GALR3). Involved in a large number of putative physiological functions in CNS homeostatic processes, including the regulation of gonadotropin-releasing hormone secretion. The polypeptide is Galanin-like peptide (GALP) (Sus scrofa (Pig)).